Consider the following 182-residue polypeptide: Dual-action ribosomal maturation protein DarP (182 aa).

Residues 1-20 (MNKQPEEWQDPQSLQQQDDE) are disordered.

This sequence belongs to the DarP family.

It is found in the cytoplasm. In terms of biological role, member of a network of 50S ribosomal subunit biogenesis factors which assembles along the 30S-50S interface, preventing incorrect 23S rRNA structures from forming. Promotes peptidyl transferase center (PTC) maturation. The chain is Dual-action ribosomal maturation protein DarP from Sodalis glossinidius (strain morsitans).